Here is a 340-residue protein sequence, read N- to C-terminus: Ketol-acid reductoisomerase (NADP(+)) (340 aa).

Residues 3–182 (VQMEYEKDVK…GAARVGLLET (180 aa)) form the KARI N-terminal Rossmann domain. NADP(+)-binding positions include 26–29 (YGSQ), arginine 49, serine 53, and 83–86 (DEIQ). The active site involves histidine 108. NADP(+) is bound at residue glycine 134. The KARI C-terminal knotted domain maps to 183–328 (TYKEETEEDL…AELRKAMPFV (146 aa)). The Mg(2+) site is built by aspartate 191, glutamate 195, glutamate 227, and glutamate 231. Serine 252 serves as a coordination point for substrate.

The protein belongs to the ketol-acid reductoisomerase family. Mg(2+) serves as cofactor.

It carries out the reaction (2R)-2,3-dihydroxy-3-methylbutanoate + NADP(+) = (2S)-2-acetolactate + NADPH + H(+). It catalyses the reaction (2R,3R)-2,3-dihydroxy-3-methylpentanoate + NADP(+) = (S)-2-ethyl-2-hydroxy-3-oxobutanoate + NADPH + H(+). The protein operates within amino-acid biosynthesis; L-isoleucine biosynthesis; L-isoleucine from 2-oxobutanoate: step 2/4. Its pathway is amino-acid biosynthesis; L-valine biosynthesis; L-valine from pyruvate: step 2/4. Involved in the biosynthesis of branched-chain amino acids (BCAA). Catalyzes an alkyl-migration followed by a ketol-acid reduction of (S)-2-acetolactate (S2AL) to yield (R)-2,3-dihydroxy-isovalerate. In the isomerase reaction, S2AL is rearranged via a Mg-dependent methyl migration to produce 3-hydroxy-3-methyl-2-ketobutyrate (HMKB). In the reductase reaction, this 2-ketoacid undergoes a metal-dependent reduction by NADPH to yield (R)-2,3-dihydroxy-isovalerate. This Streptococcus pneumoniae (strain CGSP14) protein is Ketol-acid reductoisomerase (NADP(+)).